Consider the following 383-residue polypeptide: DNA dC-&gt;dU-editing enzyme APOBEC-3G (383 aa).

An essential for cytoplasmic localization region spans residues 1 to 60; that stretch reads MKPHFRNTVERMYRGTFFYNFNNRPILSRRNTVWLCYEVKTRGPSMPTWGAKIFRGQLYP. 2 CMP/dCMP-type deaminase domains span residues 29-138 and 214-327; these read RRNT…LRIL and GQRE…LRTL. Phosphothreonine; by PKA is present on Thr32. Zn(2+) contacts are provided by His65, Cys97, and Cys100. Residues 209-335 are necessary for homooligomerization; it reads KPWVSGQRET…TLHRDGAKIA (127 aa). The interaction with DNA stretch occupies residues 213 to 215; sequence SGQ. A Phosphothreonine; by PKA and CAMK2 modification is found at Thr218. His257 is a Zn(2+) binding site. Residue Glu259 is the Proton donor of the active site. Cys287 and Cys290 together coordinate Zn(2+). The tract at residues 312–319 is interaction with DNA; it reads RIYDDQGR.

It belongs to the cytidine and deoxycytidylate deaminase family. As to quaternary structure, homodimer. Homooligomer. Can bind RNA to form ribonucleoprotein complexes of high-molecular-mass (HMM) or low-molecular-mass (LMM). HMM is inactive and heterogeneous in protein composition because of binding nonselectively to cellular RNAs, which in turn are associated with variety of cellular proteins. The LMM form which is enzymatically active has few or no RNAs associated. Its ability to form homooligomer is distinct from its ability to assemble into HMM. Interacts with APOBEC3B, APOBEC3F, MOV10, AGO2, EIF4E, EIF4ENIF1, DCP2 and DDX6 in an RNA-dependent manner. Interacts with AGO1, AGO3 and PKA/PRKACA. Requires Zn(2+) as cofactor.

Its subcellular location is the cytoplasm. It is found in the nucleus. The protein localises to the P-body. The enzyme catalyses a 2'-deoxycytidine in single-stranded DNA + H2O + H(+) = a 2'-deoxyuridine in single-stranded DNA + NH4(+). DNA deaminase (cytidine deaminase) which acts as an inhibitor of retrovirus replication and retrotransposon mobility. After the penetration of retroviral nucleocapsids into target cells of infection and the initiation of reverse transcription, it can induce the conversion of cytosine to uracil in the minus-sense single-strand viral DNA, leading to G-to-A hypermutations in the subsequent plus-strand viral DNA. The resultant detrimental levels of mutations in the proviral genome, along with a deamination-independent mechanism that works prior to the proviral integration, together exert efficient antiretroviral effects in infected target cells. Selectively targets single-stranded DNA and does not deaminate double-stranded DNA or single- or double-stranded RNA. The protein is DNA dC-&gt;dU-editing enzyme APOBEC-3G (APOBEC3G) of Erythrocebus patas (Red guenon).